Reading from the N-terminus, the 217-residue chain is Cyclin-P2-1 (217 aa).

The protein belongs to the cyclin family. Cyclin U/P subfamily.

In Oryza sativa subsp. japonica (Rice), this protein is Cyclin-P2-1 (CYCP2-1).